A 152-amino-acid polypeptide reads, in one-letter code: Type-1 angiotensin II receptor-associated protein (152 aa).

Topologically, residues 1-23 are extracellular; the sequence is MELPAVNLKVILLGHWLLTTWGC. A helical transmembrane segment spans residues 24-44; the sequence is IVFSGSYAWANFTILALGVWA. At 45-55 the chain is on the cytoplasmic side; it reads VAQRDSIDAIS. A helical transmembrane segment spans residues 56–76; it reads MFLGGLLATIFLDIVHISIFY. The Extracellular segment spans residues 77-86; that stretch reads PRAGLTDTGR. The helical transmembrane segment at 87-107 threads the bilayer; the sequence is FGAGMAILSLLLKPLSCCFVY. The Cytoplasmic segment spans residues 108 to 152; the sequence is HMYRQRGGFLGSSQDRSAYQTIDSAEAPANAFAVPEGRGQDARGY. Phosphoserine is present on residues serine 119 and serine 120. Threonine 128 is modified (phosphothreonine). A Phosphoserine modification is found at serine 131.

In terms of assembly, interacts with RACK1, and with the carboxy-terminal region of AGTR1.

It is found in the endoplasmic reticulum membrane. It localises to the golgi apparatus membrane. The protein localises to the cytoplasmic vesicle membrane. Appears to be a negative regulator of type-1 angiotensin II receptor-mediated signaling by regulating receptor internalization as well as mechanism of receptor desensitization such as phosphorylation. Also induces a decrease in cell proliferation and angiotensin II-stimulated transcriptional activity. The sequence is that of Type-1 angiotensin II receptor-associated protein (AGTRAP) from Pongo abelii (Sumatran orangutan).